Reading from the N-terminus, the 380-residue chain is Gap junction gamma-1 protein (380 aa).

Residues 1–22 (MSWSFLTRLLDEISNHSTFVGK) lie on the Cytoplasmic side of the membrane. A helical transmembrane segment spans residues 23–45 (IWLTLFIIFRIVLTVVGGESIYY). The Extracellular portion of the chain corresponds to 46-75 (DEQSKFVCNTQQPGCENVCYDAFAPLSHVR). Residues 76–95 (FWVFQIILITTPTIMYLGFA) traverse the membrane as a helical segment. Residues 96–171 (MHKIARSNDV…RRIKRDGLMK (76 aa)) are Cytoplasmic-facing. A helical transmembrane segment spans residues 172–194 (VYILQLLSRIIFEVGFLFGQYIL). Residues 195–228 (YGFEVAPSYVCTRSPCPHTVDCFVSRPTEKTIFL) lie on the Extracellular side of the membrane. A helical transmembrane segment spans residues 229–251 (LIMYAVSCLCLSLTVLEILHLGL). Residues 252–380 (SGIRDAFRRR…GSKCEKGIHA (129 aa)) lie on the Cytoplasmic side of the membrane. A disordered region spans residues 337 to 380 (AYQNGESSPSRSSSPESNGTAVEQNRLNFAQEKQGSKCEKGIHA). Low complexity predominate over residues 342–353 (ESSPSRSSSPES). Residues 354–369 (NGTAVEQNRLNFAQEK) show a composition bias toward polar residues. The span at 370 to 380 (QGSKCEKGIHA) shows a compositional bias: basic and acidic residues.

Belongs to the connexin family. Gamma-type subfamily. In terms of assembly, a connexon is composed of a hexamer of connexins.

It localises to the cell membrane. The protein resides in the cell junction. Its subcellular location is the gap junction. Its function is as follows. One gap junction consists of a cluster of closely packed pairs of transmembrane channels, the connexons, through which materials of low MW diffuse from one cell to a neighboring cell. Participates in a developmental pathway for formation of the notochord and tail. The polypeptide is Gap junction gamma-1 protein (gjc1) (Danio rerio (Zebrafish)).